The primary structure comprises 779 residues: Ribosome-releasing factor 2, mitochondrial (779 aa).

Residues 68-353 (AKIRNIGIMA…AVTTYLPSPE (286 aa)) enclose the tr-type G domain. Residues 77–84 (AHIDAGKT), 141–145 (DTPGH), and 195–198 (NKMD) each bind GTP.

The protein belongs to the TRAFAC class translation factor GTPase superfamily. Classic translation factor GTPase family. EF-G/EF-2 subfamily.

The protein localises to the mitochondrion. It catalyses the reaction GTP + H2O = GDP + phosphate + H(+). Mitochondrial GTPase that mediates the disassembly of ribosomes from messenger RNA at the termination of mitochondrial protein biosynthesis. Acts in collaboration with MRRF. GTP hydrolysis follows the ribosome disassembly and probably occurs on the ribosome large subunit. Not involved in the GTP-dependent ribosomal translocation step during translation elongation. The protein is Ribosome-releasing factor 2, mitochondrial (Gfm2) of Mus musculus (Mouse).